Here is a 320-residue protein sequence, read N- to C-terminus: 1-aminocyclopropane-1-carboxylate oxidase (320 aa).

The 101-residue stretch at 156 to 256 (PTFGTKVSNY…RMSIASFYNP (101 aa)) folds into the Fe2OG dioxygenase domain. Residues H180, D182, and H237 each coordinate Fe cation.

The protein belongs to the iron/ascorbate-dependent oxidoreductase family. It depends on Fe cation as a cofactor.

The catalysed reaction is 1-aminocyclopropane-1-carboxylate + L-ascorbate + O2 = ethene + L-dehydroascorbate + hydrogen cyanide + CO2 + 2 H2O. It functions in the pathway alkene biosynthesis; ethylene biosynthesis via S-adenosyl-L-methionine; ethylene from S-adenosyl-L-methionine: step 2/2. In Brassica juncea (Indian mustard), this protein is 1-aminocyclopropane-1-carboxylate oxidase (ACO).